The primary structure comprises 439 residues: uncharacterized protein (439 aa).

Residues 65–208 form the DAGKc domain; sequence TRPKRVFVLV…VYAFELTTEG (144 aa).

This is an uncharacterized protein from Caenorhabditis elegans.